Here is a 321-residue protein sequence, read N- to C-terminus: Lipoyl synthase (321 aa).

Residues cysteine 68, cysteine 73, cysteine 79, cysteine 94, cysteine 98, cysteine 101, and serine 308 each coordinate [4Fe-4S] cluster. Positions 80–297 (FNHGTATFMI…RVFAEEIGFT (218 aa)) constitute a Radical SAM core domain.

The protein belongs to the radical SAM superfamily. Lipoyl synthase family. [4Fe-4S] cluster serves as cofactor.

It is found in the cytoplasm. The catalysed reaction is [[Fe-S] cluster scaffold protein carrying a second [4Fe-4S](2+) cluster] + N(6)-octanoyl-L-lysyl-[protein] + 2 oxidized [2Fe-2S]-[ferredoxin] + 2 S-adenosyl-L-methionine + 4 H(+) = [[Fe-S] cluster scaffold protein] + N(6)-[(R)-dihydrolipoyl]-L-lysyl-[protein] + 4 Fe(3+) + 2 hydrogen sulfide + 2 5'-deoxyadenosine + 2 L-methionine + 2 reduced [2Fe-2S]-[ferredoxin]. It functions in the pathway protein modification; protein lipoylation via endogenous pathway; protein N(6)-(lipoyl)lysine from octanoyl-[acyl-carrier-protein]: step 2/2. In terms of biological role, catalyzes the radical-mediated insertion of two sulfur atoms into the C-6 and C-8 positions of the octanoyl moiety bound to the lipoyl domains of lipoate-dependent enzymes, thereby converting the octanoylated domains into lipoylated derivatives. This Shewanella woodyi (strain ATCC 51908 / MS32) protein is Lipoyl synthase.